Reading from the N-terminus, the 327-residue chain is GTPase Obg (327 aa).

The 159-residue stretch at 1-159 (MQFIDQANII…WEVQLELKLL (159 aa)) folds into the Obg domain. An OBG-type G domain is found at 160-327 (AEVGIIGLPN…PLLSEVWKRI (168 aa)). Residues 166 to 173 (GLPNAGKS), 191 to 195 (FTTLI), 213 to 216 (DIPG), 280 to 283 (NKME), and 309 to 311 (SSS) each bind ATP. Residues Ser-173 and Thr-193 each contribute to the Mg(2+) site.

This sequence belongs to the TRAFAC class OBG-HflX-like GTPase superfamily. OBG GTPase family. In terms of assembly, monomer. Requires Mg(2+) as cofactor.

Its subcellular location is the cytoplasm. Its function is as follows. An essential GTPase which binds GTP, GDP and possibly (p)ppGpp with moderate affinity, with high nucleotide exchange rates and a fairly low GTP hydrolysis rate. Plays a role in control of the cell cycle, stress response, ribosome biogenesis and in those bacteria that undergo differentiation, in morphogenesis control. This chain is GTPase Obg, found in Prochlorococcus marinus subsp. pastoris (strain CCMP1986 / NIES-2087 / MED4).